A 375-amino-acid polypeptide reads, in one-letter code: Succinyl-diaminopimelate desuccinylase (375 aa).

Residue His66 participates in Zn(2+) binding. Asp68 is an active-site residue. Residue Asp99 coordinates Zn(2+). Glu130 (proton acceptor) is an active-site residue. Zn(2+)-binding residues include Glu131, Glu159, and His345.

Belongs to the peptidase M20A family. DapE subfamily. Homodimer. Zn(2+) serves as cofactor. It depends on Co(2+) as a cofactor.

The enzyme catalyses N-succinyl-(2S,6S)-2,6-diaminopimelate + H2O = (2S,6S)-2,6-diaminopimelate + succinate. It participates in amino-acid biosynthesis; L-lysine biosynthesis via DAP pathway; LL-2,6-diaminopimelate from (S)-tetrahydrodipicolinate (succinylase route): step 3/3. Functionally, catalyzes the hydrolysis of N-succinyl-L,L-diaminopimelic acid (SDAP), forming succinate and LL-2,6-diaminopimelate (DAP), an intermediate involved in the bacterial biosynthesis of lysine and meso-diaminopimelic acid, an essential component of bacterial cell walls. This chain is Succinyl-diaminopimelate desuccinylase, found in Xanthobacter autotrophicus (strain ATCC BAA-1158 / Py2).